A 162-amino-acid polypeptide reads, in one-letter code: Peptidyl-prolyl cis-trans isomerase (162 aa).

Residues 5–161 (FFDVQFGGDA…TTIKIVDSGV (157 aa)) enclose the PPIase cyclophilin-type domain.

This sequence belongs to the cyclophilin-type PPIase family. PPIase A subfamily.

The catalysed reaction is [protein]-peptidylproline (omega=180) = [protein]-peptidylproline (omega=0). With respect to regulation, binds cyclosporin A (CsA). CsA mediates some of its effects via an inhibitory action on PPIase. Its function is as follows. PPIases accelerate the folding of proteins. It catalyzes the cis-trans isomerization of proline imidic peptide bonds in oligopeptides. The sequence is that of Peptidyl-prolyl cis-trans isomerase from Paramecium primaurelia.